A 167-amino-acid chain; its full sequence is Cytochrome c-type biogenesis protein CcmE (167 aa).

Residues 1–7 lie on the Cytoplasmic side of the membrane; sequence MTRKTRR. The helical; Signal-anchor for type II membrane protein transmembrane segment at 8–28 threads the bilayer; it reads LWIVIACLACVGSAAALTLRA. Over 29 to 167 the chain is Periplasmic; sequence FSSNIVFFMA…DTMTAKKAGG (139 aa). The heme site is built by histidine 125 and tyrosine 129. The span at 141–150 shows a compositional bias: basic and acidic residues; that stretch reads TGKWDPRFGK. Residues 141 to 167 form a disordered region; it reads TGKWDPRFGKAPDASSWDTMTAKKAGG.

This sequence belongs to the CcmE/CycJ family.

The protein resides in the cell inner membrane. Heme chaperone required for the biogenesis of c-type cytochromes. Transiently binds heme delivered by CcmC and transfers the heme to apo-cytochromes in a process facilitated by CcmF and CcmH. The polypeptide is Cytochrome c-type biogenesis protein CcmE (Gluconobacter oxydans (strain 621H) (Gluconobacter suboxydans)).